We begin with the raw amino-acid sequence, 728 residues long: Bacteriophytochrome (728 aa).

Cysteine 12 contributes to the a tetrapyrrole binding site. The tract at residues 17–495 is chromophore binding domain; that stretch reads IHVPGAIQPH…RLDLMELCLN (479 aa). A GAF domain is found at 139–303; sequence DTASLLSNVT…IFSQVCSAIV (165 aa). In terms of domain architecture, Histidine kinase spans 510-721; it reads VLGHDLRNPL…TFCLRLPVRQ (212 aa). Histidine 513 carries the phosphohistidine; by autocatalysis modification.

The protein in the N-terminal section; belongs to the phytochrome family. Post-translationally, contains one covalently linked tetrapyrrole chromophore.

The enzyme catalyses ATP + protein L-histidine = ADP + protein N-phospho-L-histidine.. Photoreceptor which exists in two forms that are reversibly interconvertible by light: the R form that absorbs maximally in the red region of the spectrum and the FR form that absorbs maximally in the far-red region. This chain is Bacteriophytochrome (bphP), found in Pseudomonas aeruginosa (strain ATCC 15692 / DSM 22644 / CIP 104116 / JCM 14847 / LMG 12228 / 1C / PRS 101 / PAO1).